Here is a 530-residue protein sequence, read N- to C-terminus: Ubiquitin carboxyl-terminal hydrolase 17-like protein 19 (530 aa).

Positions alanine 80 to lysine 375 constitute a USP domain. The Nucleophile role is filled by cysteine 89. Histidine 334 (proton acceptor) is an active-site residue. Composition is skewed to basic and acidic residues over residues serine 382–arginine 392 and aspartate 398–proline 413. Disordered stretches follow at residues serine 382 to proline 413 and lysine 476 to glutamine 530. Positions serine 484–threonine 495 are enriched in low complexity. A compositionally biased stretch (polar residues) spans histidine 496–leucine 505. Positions glycine 510–arginine 524 are enriched in basic residues.

It belongs to the peptidase C19 family. USP17 subfamily.

Its subcellular location is the nucleus. It localises to the endoplasmic reticulum. It catalyses the reaction Thiol-dependent hydrolysis of ester, thioester, amide, peptide and isopeptide bonds formed by the C-terminal Gly of ubiquitin (a 76-residue protein attached to proteins as an intracellular targeting signal).. Deubiquitinating enzyme that removes conjugated ubiquitin from specific proteins to regulate different cellular processes that may include cell proliferation, progression through the cell cycle, apoptosis, cell migration, and the cellular response to viral infection. The polypeptide is Ubiquitin carboxyl-terminal hydrolase 17-like protein 19 (USP17L19) (Homo sapiens (Human)).